The chain runs to 503 residues: Anthranilate synthase component 1 3 (503 aa).

L-tryptophan is bound at residue 269-271 (PYS). 304-305 (GT) lines the chorismate pocket. Position 331 (Glu331) interacts with Mg(2+). Residues Tyr419, Arg439, 453 to 455 (GSG), and Gly455 contribute to the chorismate site. Glu468 is a binding site for Mg(2+).

This sequence belongs to the anthranilate synthase component I family. In terms of assembly, tetramer of two components I and two components II. Mg(2+) is required as a cofactor.

The enzyme catalyses chorismate + L-glutamine = anthranilate + pyruvate + L-glutamate + H(+). It functions in the pathway amino-acid biosynthesis; L-tryptophan biosynthesis; L-tryptophan from chorismate: step 1/5. This Haloarcula marismortui (strain ATCC 43049 / DSM 3752 / JCM 8966 / VKM B-1809) (Halobacterium marismortui) protein is Anthranilate synthase component 1 3 (trpE3).